Reading from the N-terminus, the 841-residue chain is Envelope glycoprotein H (841 aa).

The N-terminal stretch at Met1 to Ala17 is a signal peptide. N-linked (GlcNAc...) asparagine; by host glycans are attached at residues Asn18, Asn45, and Asn217. Residues Asn18–Gly802 lie on the Virion surface side of the membrane. The interval Asp246–Leu309 is interaction with gL. N-linked (GlcNAc...) asparagine; by host glycosylation is found at Asn317, Asn499, Asn522, Asn760, and Asn783. The chain crosses the membrane as a helical span at residues Gln803–Gly823. Residues Trp824–Thr841 lie on the Intravirion side of the membrane.

It belongs to the herpesviridae glycoprotein H family. In terms of assembly, interacts with glycoprotein L (gL); this interaction is necessary for the correct processing and cell surface expression of gH. The heterodimer gH/gL seems to interact with gB trimers during fusion. Post-translationally, N-glycosylated, O-glycosylated, and sialylated.

The protein resides in the virion membrane. Its subcellular location is the host cell membrane. It is found in the host endosome membrane. The heterodimer glycoprotein H-glycoprotein L is required for the fusion of viral and plasma membranes leading to virus entry into the host cell. Following initial binding to host receptor, membrane fusion is mediated by the fusion machinery composed of gB and the heterodimer gH/gL. May also be involved in the fusion between the virion envelope and the outer nuclear membrane during virion morphogenesis. The chain is Envelope glycoprotein H from Varicella-zoster virus (strain Oka vaccine) (HHV-3).